The primary structure comprises 322 residues: Solute carrier family 35 member B1 (322 aa).

Helical transmembrane passes span 12–32, 51–71, 85–105, 136–156, 168–188, 210–230, 243–263, and 285–305; these read LRLP…GILQ, FALT…KILI, WLYA…NSAL, YPLA…LFMY, TVGF…LTGV, LWST…WEFL, ILLF…TVVY, and VILF…LVFL. The Di-lysine motif signature appears at 318–322; sequence KKTSH.

It belongs to the nucleotide-sugar transporter family. SLC35B subfamily.

Its subcellular location is the endoplasmic reticulum membrane. It carries out the reaction ADP(in) + ATP(out) = ADP(out) + ATP(in). The catalysed reaction is UDP(out) + ATP(in) = UDP(in) + ATP(out). The enzyme catalyses UTP(out) + ATP(in) = UTP(in) + ATP(out). It catalyses the reaction dATP(out) + ATP(in) = dATP(in) + ATP(out). Functionally, ATP:ADP antiporter that catalyzes the exchange of ATP and ADP across the endoplasmic reticulum (ER) membrane. Imports ATP from the cytosol to the ER lumen and exports ADP in the opposite direction. Regulates ER energy metabolism and protein biogenesis. Appears to be part of a calcium-dependent ER to cytosol low energy response axis, where calcium efflux from ER to the cytosol triggers ATP import into the ER lumen to maintain sufficient ATP supply. Provides ATP to ER chaperone HSPA5 that drives protein folding and trafficking in the ER. Can transport dATP, UTP or UDP in exchange for ATP, but the physiological relevance of this process remains to be established. This is Solute carrier family 35 member B1 (Slc35b1) from Mus musculus (Mouse).